The chain runs to 51 residues: Sperm protamine P1 (51 aa).

It belongs to the protamine P1 family. Testis.

Its subcellular location is the nucleus. It is found in the chromosome. Functionally, protamines substitute for histones in the chromatin of sperm during the haploid phase of spermatogenesis. They compact sperm DNA into a highly condensed, stable and inactive complex. The polypeptide is Sperm protamine P1 (PRM1) (Piliocolobus badius (Western red colobus)).